Reading from the N-terminus, the 118-residue chain is Small ribosomal subunit protein uS13 (118 aa).

The interval 93 to 118 (RGLPVRGQRTKTNARTRKGPRKPIRK) is disordered.

The protein belongs to the universal ribosomal protein uS13 family. Part of the 30S ribosomal subunit. Forms a loose heterodimer with protein S19. Forms two bridges to the 50S subunit in the 70S ribosome.

Functionally, located at the top of the head of the 30S subunit, it contacts several helices of the 16S rRNA. In the 70S ribosome it contacts the 23S rRNA (bridge B1a) and protein L5 of the 50S subunit (bridge B1b), connecting the 2 subunits; these bridges are implicated in subunit movement. Contacts the tRNAs in the A and P-sites. This Pseudomonas syringae pv. tomato (strain ATCC BAA-871 / DC3000) protein is Small ribosomal subunit protein uS13.